A 264-amino-acid chain; its full sequence is Phosphonoacetaldehyde hydrolase (264 aa).

Residue Asp9 is the Nucleophile of the active site. Residues Asp9 and Ala11 each coordinate Mg(2+). The active-site Schiff-base intermediate with substrate is Lys50. Asp183 serves as a coordination point for Mg(2+).

The protein belongs to the HAD-like hydrolase superfamily. PhnX family. As to quaternary structure, homodimer. It depends on Mg(2+) as a cofactor.

The enzyme catalyses phosphonoacetaldehyde + H2O = acetaldehyde + phosphate + H(+). Functionally, involved in phosphonate degradation. This Bacillus cereus (strain ZK / E33L) protein is Phosphonoacetaldehyde hydrolase.